The following is a 351-amino-acid chain: Transcription factor Atoh1 (351 aa).

Disordered regions lie at residues 16–39 and 89–116; these read LGDH…PATL and EAAA…SKSP. Pro residues predominate over residues 26 to 36; the sequence is HHVPPLTPQPP. The region spanning 156 to 208 is the bHLH domain; that stretch reads QRRLAANARERRRMHGLNHAFDQLRNVIPSFNNDKKLSKYETLQMAQIYINAL. 2 disordered regions span residues 244-278 and 308-351; these read GAGA…GPAS and LSPS…DEAS. Low complexity predominate over residues 247 to 256; sequence ASAVAGAQPA. A compositionally biased stretch (pro residues) spans 258-268; it reads GGGPRPTPPGP. The segment covering 332–351 has biased composition (basic and acidic residues); the sequence is HRSDGEFSPHSHYSDSDEAS.

Efficient DNA binding requires dimerization with another bHLH protein. In terms of tissue distribution, developing nervous system, and in adult epithelial cells of the gastrointestinal tract.

It is found in the nucleus. Its function is as follows. Transcriptional regulator. Activates E box-dependent transcription in collaboration with TCF3/E47, but the activity is completely antagonized by the negative regulator of neurogenesis HES1. Plays a role in the differentiation of subsets of neural cells by activating E box-dependent transcription. The polypeptide is Transcription factor Atoh1 (Mus musculus (Mouse)).